We begin with the raw amino-acid sequence, 102 residues long: Small ribosomal subunit protein bS6 (102 aa).

It belongs to the bacterial ribosomal protein bS6 family.

In terms of biological role, binds together with bS18 to 16S ribosomal RNA. The polypeptide is Small ribosomal subunit protein bS6 (Desulfovibrio desulfuricans (strain ATCC 27774 / DSM 6949 / MB)).